Reading from the N-terminus, the 359-residue chain is Serpentine receptor class epsilon-13 (359 aa).

The next 7 helical transmembrane spans lie at tyrosine 33–leucine 53, alanine 74–isoleucine 94, isoleucine 111–alanine 131, tryptophan 150–phenylalanine 170, valine 180–leucine 200, leucine 237–leucine 257, and leucine 266–isoleucine 286.

It belongs to the nematode receptor-like protein sre family.

It is found in the membrane. This is Serpentine receptor class epsilon-13 (sre-13) from Caenorhabditis elegans.